The primary structure comprises 146 residues: Aspartate 1-decarboxylase (146 aa).

The active-site Schiff-base intermediate with substrate; via pyruvic acid is the Ser-25. Ser-25 is modified (pyruvic acid (Ser)). Position 57 (Thr-57) interacts with substrate. The active-site Proton donor is Tyr-58. Residue 73–75 (GPA) coordinates substrate.

The protein belongs to the PanD family. In terms of assembly, heterooctamer of four alpha and four beta subunits. Requires pyruvate as cofactor. Post-translationally, is synthesized initially as an inactive proenzyme, which is activated by self-cleavage at a specific serine bond to produce a beta-subunit with a hydroxyl group at its C-terminus and an alpha-subunit with a pyruvoyl group at its N-terminus.

The protein localises to the cytoplasm. It catalyses the reaction L-aspartate + H(+) = beta-alanine + CO2. Its pathway is cofactor biosynthesis; (R)-pantothenate biosynthesis; beta-alanine from L-aspartate: step 1/1. Catalyzes the pyruvoyl-dependent decarboxylation of aspartate to produce beta-alanine. This is Aspartate 1-decarboxylase from Salinibacter ruber (strain DSM 13855 / M31).